Reading from the N-terminus, the 282-residue chain is Peptidoglycan-recognition protein LD (282 aa).

The disordered stretch occupies residues 1–29 (MDSSHIAVRVARRSPSPAAVSQSSYGSLG). At 1–88 (MDSSHIAVRV…RRNPTLHEDC (88 aa)) the chain is on the cytoplasmic side. Residues 89-111 (FNWRSVGLLVMCASALALAAYLL) form a helical membrane-spanning segment. Residues 112 to 282 (WRQTQTPDFG…PHYASHQTSK (171 aa)) are Extracellular-facing. A disulfide bond links Cys-162 and Cys-166. Asn-222 carries an N-linked (GlcNAc...) asparagine glycan.

It belongs to the N-acetylmuramoyl-L-alanine amidase 2 family. In terms of tissue distribution, expressed in uninduced hemocytes and mbn-2 cells.

The protein resides in the cell membrane. Functionally, peptidoglycan-recognition protein probably involved in innate immunity by binding to peptidoglycans (PGN) of bacteria and activating the immune response. This is Peptidoglycan-recognition protein LD (PGRP-LD) from Drosophila melanogaster (Fruit fly).